Here is a 305-residue protein sequence, read N- to C-terminus: RxLR effector protein PexRD25 (305 aa).

An N-terminal signal peptide occupies residues 1-16 (MRFLFYMLLACSAVVA). The RxLR-dEER signature appears at 44–56 (RLLRDRRSVDEER).

It belongs to the RxLR effector family.

Its subcellular location is the secreted. It localises to the host nucleus. The protein localises to the host nucleolus. Effector that enhances P.infestans colonization of Nicotiana benthamiana leaves. The polypeptide is RxLR effector protein PexRD25 (Phytophthora infestans (strain T30-4) (Potato late blight agent)).